A 103-amino-acid polypeptide reads, in one-letter code: Small ribosomal subunit protein uS10 (103 aa).

Belongs to the universal ribosomal protein uS10 family. In terms of assembly, part of the 30S ribosomal subunit.

In terms of biological role, involved in the binding of tRNA to the ribosomes. This is Small ribosomal subunit protein uS10 from Persephonella marina (strain DSM 14350 / EX-H1).